The primary structure comprises 205 residues: Small ribosomal subunit protein uS5 (205 aa).

An S5 DRBM domain is found at 49 to 112 (LVDEVLDINM…VSAKINLVKV (64 aa)).

It belongs to the universal ribosomal protein uS5 family. As to quaternary structure, part of the 30S ribosomal subunit. Contacts protein S4.

With S4 and S12 plays an important role in translational accuracy. The protein is Small ribosomal subunit protein uS5 of Methanospirillum hungatei JF-1 (strain ATCC 27890 / DSM 864 / NBRC 100397 / JF-1).